Here is a 458-residue protein sequence, read N- to C-terminus: ATP synthase subunit beta (458 aa).

An ATP-binding site is contributed by 148 to 155 (GGAGVGKT).

It belongs to the ATPase alpha/beta chains family. As to quaternary structure, F-type ATPases have 2 components, CF(1) - the catalytic core - and CF(0) - the membrane proton channel. CF(1) has five subunits: alpha(3), beta(3), gamma(1), delta(1), epsilon(1). CF(0) has three main subunits: a(1), b(2) and c(9-12). The alpha and beta chains form an alternating ring which encloses part of the gamma chain. CF(1) is attached to CF(0) by a central stalk formed by the gamma and epsilon chains, while a peripheral stalk is formed by the delta and b chains.

The protein localises to the cell inner membrane. The catalysed reaction is ATP + H2O + 4 H(+)(in) = ADP + phosphate + 5 H(+)(out). Functionally, produces ATP from ADP in the presence of a proton gradient across the membrane. The catalytic sites are hosted primarily by the beta subunits. The protein is ATP synthase subunit beta of Laribacter hongkongensis (strain HLHK9).